Here is a 399-residue protein sequence, read N- to C-terminus: Semaphorin-like protein 139 (399 aa).

The signal sequence occupies residues 1–14 (MIPLLFILFYFTNC). Residues 15-399 (IEWHKFETSE…IPRMKKILKM (385 aa)) form the Sema domain.

The protein belongs to the semaphorin family. In terms of assembly, interacts with host VESPR.

It localises to the secreted. In terms of biological role, acts as a semaphorin-like protein and binds to host plexin C1 receptor. May alter the movement of plexin C1-expressing cells including dendritic cells, monocytes, or granulocytes in the proximity of infected cells. May also regulate host cell cytoskeleton of neighboring cells to improve viral infection. The polypeptide is Semaphorin-like protein 139 (EVM139) (Ectromelia virus (strain Moscow) (ECTV)).